The sequence spans 518 residues: Protein translocase subunit SecD (518 aa).

Transmembrane regions (helical) follow at residues 9-29, 361-381, 384-404, 406-426, 452-474, and 486-506; these read IFLS…NFMQ, LIGF…LGLF, IALS…QATL, LPGI…NVLI, FATI…IFGV, and IGII…IDIW.

It belongs to the SecD/SecF family. SecD subfamily. As to quaternary structure, forms a complex with SecF. Part of the essential Sec protein translocation apparatus which comprises SecA, SecYEG and auxiliary proteins SecDF-YajC and YidC.

The protein localises to the cell inner membrane. Its function is as follows. Part of the Sec protein translocase complex. Interacts with the SecYEG preprotein conducting channel. SecDF uses the proton motive force (PMF) to complete protein translocation after the ATP-dependent function of SecA. This is Protein translocase subunit SecD from Rickettsia felis (strain ATCC VR-1525 / URRWXCal2) (Rickettsia azadi).